A 321-amino-acid polypeptide reads, in one-letter code: Glucokinase (321 aa).

Residue 8-13 (GDVGGT) participates in ATP binding.

The protein belongs to the bacterial glucokinase family.

Its subcellular location is the cytoplasm. It carries out the reaction D-glucose + ATP = D-glucose 6-phosphate + ADP + H(+). The sequence is that of Glucokinase from Escherichia fergusonii (strain ATCC 35469 / DSM 13698 / CCUG 18766 / IAM 14443 / JCM 21226 / LMG 7866 / NBRC 102419 / NCTC 12128 / CDC 0568-73).